We begin with the raw amino-acid sequence, 795 residues long: Phospholipase A-2-activating protein (795 aa).

WD repeat units lie at residues 17 to 56 (HELDVRGLVCCAYPPGAFVSVSRDRTTRLWAPDSPNRSFT), 63 to 107 (GHSN…PLYI), 110 to 148 (GHKNTVCSLSSGKFGTLLSGSWDTTAKVWLNDKCMMTLQ), 149 to 188 (GHTAAVWAVKILPEQGLMLTGSADKTVKLWKAGRCERTFS), 190 to 227 (HEDCVRGLAILSETEFLSCANDASIRRWQITGECLEVY), 229 to 268 (GHTNYIYSISVFPNCRDFVTTAEDRSLRIWKHGECAQTIR), and 270 to 307 (PAQSIWCCCVLDNGDIVVGASDGIIRVFTESEDRTASA). Position 50 is a phosphoserine (S50). A PFU domain is found at 366-465 (QWSVSEGRWI…KGQMLGLGNP (100 aa)). Residue K529 is modified to N6-acetyllysine. The 262-residue stretch at 533–794 (IYFPKKEAVT…SECCRFILNL (262 aa)) folds into the PUL domain. ARM repeat units follow at residues 546–588 (ANPT…NSSS), 589–620 (EKPTVQQLQILWKAINCPEDIVFPALDILRLS), 621–669 (IKHP…CFVG), 670–715 (QAGQ…CFHK), 716–755 (DHNIEGKAQCLSLISTILEVVQDLEATFRLLVALGTLISD), and 756–795 (DSNAVQLAKSLGVDSQIKKYSSVSEPAKVSECCRFILNLL).

It belongs to the WD repeat PLAP family. In terms of assembly, interacts with ubiquitin. Interacts with UBXN6, VCP and YOD1; may form a complex involved in macroautophagy.

Its subcellular location is the nucleus. It localises to the cytoplasm. The protein localises to the synapse. Functionally, plays a role in protein ubiquitination, sorting and degradation through its association with VCP. Involved in ubiquitin-mediated membrane proteins trafficking to late endosomes in an ESCRT-dependent manner, and hence plays a role in synaptic vesicle recycling. May play a role in macroautophagy, regulating for instance the clearance of damaged lysosomes. Plays a role in cerebellar Purkinje cell development. Positively regulates cytosolic and calcium-independent phospholipase A2 activities in a tumor necrosis factor alpha (TNF-alpha)- or lipopolysaccharide (LPS)-dependent manner, and hence prostaglandin E2 biosynthesis. This Homo sapiens (Human) protein is Phospholipase A-2-activating protein (PLAA).